Here is a 219-residue protein sequence, read N- to C-terminus: MGDILGAVYDLGHRPYLARRTVYEDRLILSTHGNVCRAINLLTHDNRTTLVYHNNTKRIRFRGLLCAYRVPYCGFRALCRVMLCSLPRLCDIPINGSRDFVADPTRLDSSVNELLVSNGLVTHYDRVHNVPIHTDGFEVVDFTTVFRGPGNFLLPNATNFPRSTTTDQVYMVCLVNTVNCVLRFESELVVWVHSGLYAGDVLDVDNNVIQAPDGVDDND.

A Nuclear localization signal motif is present at residues 57-62; the sequence is KRIRFR. The segment at 103–146 is transcription activation; it reads DPTRLDSSVNELLVSNGLVTHYDRVHNVPIHTDGFEVVDFTTVF. Positions 169-178 match the Nuclear export signal motif; the sequence is VYMVCLVNTV.

It belongs to the benyvirus P25 protein family. In terms of assembly, homooligomer.

The protein resides in the host cytoplasm. It is found in the host nucleus. Functionally, pathogenicity factor implicated in symptom exacerbation. Might function as transcription activator (Potential). This Beet necrotic yellow vein virus (isolate Japan/S) (BNYVV) protein is Protein P25.